Reading from the N-terminus, the 1230-residue chain is Myosin-1 (1230 aa).

The segment at 1-32 (MGISRRPKADKNASAADSAPGGKPNIQKAQFD) is disordered. Positions 39–713 (VGVSDLTLIS…TLFALEHMRD (675 aa)) constitute a Myosin motor domain. 132–139 (GESGAGKT) serves as a coordination point for ATP. The segment at 403 to 485 (SIGILDIYGF…PGVFSAMKDA (83 aa)) is actin-binding. 2 IQ domains span residues 717–737 (HNMAARIQRVWRAFLQIRIEA) and 738–763 (ATRIQRMFRKKREGKEFLELREKGHQ). One can recognise a TH1 domain in the interval 771–961 (RRRYSLLGSR…TIHTQAGEPP (191 aa)). Disordered stretches follow at residues 945 to 1018 (QDHY…AARP), 1033 to 1065 (TRNTSVQSTQSTRAVPPPPPPAPPAPPPAPVSK), and 1116 to 1230 (AYLE…EDDW). Residues 1033–1045 (TRNTSVQSTQSTR) are compositionally biased toward polar residues. Pro residues-rich tracts occupy residues 1047-1062 (VPPPPPPAPPAPPPAP) and 1122-1142 (TPPPPPPVATRPAPPPAPGPP). An SH3 domain is found at 1064–1123 (SKEPQYRVLYEFAGQSANEFSLKQGEIVTVLQKETNGWWLTKNVRGQGWAPTAYLEEVTP). A compositionally biased stretch (low complexity) spans 1179–1214 (RDSGMSISSNGSGNNSGRSTPTPSLAGGLAEALRAR).

The protein belongs to the TRAFAC class myosin-kinesin ATPase superfamily. Myosin family.

It is found in the cytoplasm. The protein localises to the cytoskeleton. Its subcellular location is the actin patch. Its function is as follows. Type-I myosin implicated in the organization of the actin cytoskeleton. Required for proper actin cytoskeleton polarization. At the cell cortex, assembles in patch-like structures together with proteins from the actin-polymerizing machinery and promotes actin assembly. Functions as actin nucleation-promoting factor (NPF) for the Arp2/3 complex. This Sclerotinia sclerotiorum (strain ATCC 18683 / 1980 / Ss-1) (White mold) protein is Myosin-1 (myoA).